Reading from the N-terminus, the 285-residue chain is Steroidogenic acute regulatory protein, mitochondrial (285 aa).

A mitochondrion-targeting transit peptide spans 1–63 (MLLATFKLCA…RRSSLLGSRL (63 aa)). Phosphoserine; by PKA occurs at positions 57 and 195. The region spanning 67–280 (LYSDQELAYL…LRKRLESHPA (214 aa)) is the START domain.

May interact with TSPO. As to expression, expressed in gonads, adrenal cortex and kidney.

The protein localises to the mitochondrion. It catalyses the reaction cholesterol(in) = cholesterol(out). It functions in the pathway steroid metabolism; cholesterol metabolism. Its function is as follows. Plays a key role in steroid hormone synthesis by enhancing the metabolism of cholesterol into pregnenolone. Mediates the transfer of cholesterol from the outer mitochondrial membrane to the inner mitochondrial membrane where it is cleaved to pregnenolone. In Homo sapiens (Human), this protein is Steroidogenic acute regulatory protein, mitochondrial (STAR).